The primary structure comprises 795 residues: RINT1-like protein MAG2 (795 aa).

Positions 35–64 (TGLVSELQTEISELDQRLAGLNRQLESGLA) form a coiled coil. The segment at 91-111 (TSVTRSASDSGKEEEATEHVA) is disordered. The segment covering 100 to 111 (SGKEEEATEHVA) has biased composition (basic and acidic residues). The RINT1/TIP20 domain maps to 207 to 795 (ALAMMRPQAI…KKVAKSRVFS (589 aa)).

It belongs to the RINT1 family. As to quaternary structure, interacts with SEC20 and SYP81. Interacts with ZW10 (via the central region). Forms a complex with ZW10/MIP1, MIP2 and MIP3 on the endoplasmic reticulum. Highly expressed in dry seeds. Expressed at low levels in roots, rosette and cauline leaves, stems and flowers.

Its subcellular location is the endoplasmic reticulum membrane. In terms of biological role, functions in the anterograde transport of storage protein precursors from the endoplasmic reticulum (ER) to the Golgi complex and in the retrograde transport from the Golgi complex to the ER. Forms a complex with ZW10/MIP1, MIP2 and MIP3 on the ER that may be responsible for efficient transport of seed storage proteins. Required for the responses to environmental stresses during seed germination and vegetative growth. Probably not involved in the retrograde transport from the ER to the apoplast. This is RINT1-like protein MAG2 from Arabidopsis thaliana (Mouse-ear cress).